Reading from the N-terminus, the 475-residue chain is Sulfate adenylyltransferase subunit 1 (475 aa).

Residues 25 to 239 (KSLLRFLTCG…EVLETVEIQR (215 aa)) enclose the tr-type G domain. The G1 stretch occupies residues 34 to 41 (GSVDDGKS). 34 to 41 (GSVDDGKS) provides a ligand contact to GTP. The segment at 92-96 (GITID) is G2. The segment at 113–116 (DTPG) is G3. GTP is bound by residues 113-117 (DTPGH) and 168-171 (NKMD). A G4 region spans residues 168 to 171 (NKMD). Residues 206-208 (SAL) form a G5 region.

The protein belongs to the TRAFAC class translation factor GTPase superfamily. Classic translation factor GTPase family. CysN/NodQ subfamily. Heterodimer composed of CysD, the smaller subunit, and CysN.

The catalysed reaction is sulfate + ATP + H(+) = adenosine 5'-phosphosulfate + diphosphate. Its pathway is sulfur metabolism; hydrogen sulfide biosynthesis; sulfite from sulfate: step 1/3. With CysD forms the ATP sulfurylase (ATPS) that catalyzes the adenylation of sulfate producing adenosine 5'-phosphosulfate (APS) and diphosphate, the first enzymatic step in sulfur assimilation pathway. APS synthesis involves the formation of a high-energy phosphoric-sulfuric acid anhydride bond driven by GTP hydrolysis by CysN coupled to ATP hydrolysis by CysD. This is Sulfate adenylyltransferase subunit 1 from Shigella boydii serotype 18 (strain CDC 3083-94 / BS512).